Consider the following 189-residue polypeptide: MAKSQNKESPELRTPNRFITDHDASGLSVFNTSIPDALPAQVIGGRDRFHLAYATTTSPVDLTNQSDIVTYSSFLSTPPGISLPGGSVLRIVDVRPGGESLMHRTESIDYGVVLDGEIDLVLDSGESRILKRGDVAVQRGTNHLWRNRSHTAWGRMVFVTLEAKPIEIDGKLLGGVTGLGMDDTSPAGN.

This sequence belongs to the oryJ family.

Part of the gene cluster that mediates the biosynthesis of the phomopsins, a group of hexapeptide mycotoxins which infects lupins and causes lupinosis disease in livestock. The role of phomC' within the phomopsins biosynthesis pathway has still to be determined. The pathway starts with the processing of the precursor phomA by several endopeptidases including kexin proteases as well as the cluster-specific S41 family peptidase phomP1 and the oligopeptidase phomG to produce 10 identical copies of the hexapeptide Tyr-Val-Ile-Pro-Ile-Asp. After being excised from the precursor peptide, the core peptides are cyclized and modified post-translationally by enzymes encoded within the gene cluster. The timing and order of proteolysis of the phomA precursor and PTMs are still unknown. Two tyrosinase-like enzymes, phomQ1 and phomQ2, catalyze the chlorination and hydroxylation of Tyr, respectively. PhomYb, is proposed to be involved in the construction of the macrocyclic structure. The other 4 ustYa family proteins may be involved in PTMs that generate the unique structure of phomopsin A. PhomYa is required for the hydroxylation of C-beta of Tyr. PhomYc, phomYd, and phomYe are responsible for the biosynthesis of 2,3-dehydroisoleucine (dIle), 2,3-dehydroaspartic acid (dAsp), and 3,4-dehydroproline (dPro), respectively. While dIle formation by phomYc is indispensable for the installation of dAsp by phomYd, the order of the other PTMs have not been elucidated yet. Most of the biosynthetic enzymes likely have broad substrate specificity, and thus, there might be a metabolic grid from a precursor to phomopsin A. The enzyme(s) responsible for the biosynthesis of 3,4-dehydrovaline (dVal) have also not been identified yet. Finally, phomM acts as an S-adenosylmethionine-dependent alpha-N-methyltransferase that catalyzes two successive N-methylation reactions, converting N-desmethyl-phomopsin A to phomopsin A and phomopsin A further to an N,N-dimethylated congener called phomopsin E. This Diaporthe leptostromiformis (Lupinosis disease fungus) protein is Phomopsin biosynthesis cluster protein C'.